Reading from the N-terminus, the 626-residue chain is tRNA uridine 5-carboxymethylaminomethyl modification enzyme MnmG (626 aa).

An FAD-binding site is contributed by 13–18; it reads GGGHAG. Residue 273–287 coordinates NAD(+); sequence GPRYCPSIEDKIHRF.

This sequence belongs to the MnmG family. Homodimer. Heterotetramer of two MnmE and two MnmG subunits. Requires FAD as cofactor.

It is found in the cytoplasm. In terms of biological role, NAD-binding protein involved in the addition of a carboxymethylaminomethyl (cmnm) group at the wobble position (U34) of certain tRNAs, forming tRNA-cmnm(5)s(2)U34. The chain is tRNA uridine 5-carboxymethylaminomethyl modification enzyme MnmG from Acinetobacter baumannii (strain ATCC 17978 / DSM 105126 / CIP 53.77 / LMG 1025 / NCDC KC755 / 5377).